Reading from the N-terminus, the 280-residue chain is Mastin (280 aa).

A signal peptide spans 1-15 (MLWLLVLTAPWLGGS). The propeptide occupies 16–30 (VPISPDPGLRHEQVG). The Peptidase S1 domain maps to 31–275 (IVGGCKVPAR…YVSWIHQHIP (245 aa)). Cys-62 and Cys-78 are disulfide-bonded. Catalysis depends on His-77, which acts as the Charge relay system. Asn-106 and Asn-117 each carry an N-linked (GlcNAc...) asparagine glycan. Asp-127 functions as the Charge relay system in the catalytic mechanism. 3 disulfides stabilise this stretch: Cys-161/Cys-234, Cys-194/Cys-215, and Cys-224/Cys-252. Residue Ser-228 is the Charge relay system of the active site.

It belongs to the peptidase S1 family. Oligomer; disulfide-linked. N-glycosylated. Mononuclear cells within skin, intestine, trachea and lung parenchyma, and polymorphonuclear leukocytes within capillaries and blood.

It is found in the cytoplasm. Its activity is regulated as follows. Inhibited by leupeptin and bis(5-amidino-2-benzimidazolyl)methane (BABIM). In terms of biological role, trypsin-like serine protease. Has a preference for extended substrates with basic residues at the P1 position; Arg is preferred over Lys. Active towards calcitonin gene-related peptide and gelatin. Not active towards substance P, vasoactive intestinal peptide, type I collagen or azocasein. The sequence is that of Mastin from Canis lupus familiaris (Dog).